The sequence spans 155 residues: Zinc finger HIT domain-containing protein 3 (155 aa).

Residues cysteine 11, cysteine 14, cysteine 22, cysteine 25, cysteine 30, cysteine 34, histidine 38, and cysteine 42 each contribute to the Zn(2+) site. The HIT-type zinc finger occupies 11–42; sequence CVICLEKPKYRCPACRVPYCSVVCFRKHKEQC. The residue at position 80 (serine 80) is a Phosphoserine.

As to quaternary structure, thyroid receptor interacting proteins (TRIPs) specifically interact with the ligand binding domain of the thyroid receptor (TR). Requires the presence of thyroid hormone for its interaction. Interacts with NUFIP1. Interacts (via HIT-type zinc finger) with the RUVBL1/RUVBL2 complex in the presence of ADP.

Its subcellular location is the cytoplasm. It is found in the nucleus. The polypeptide is Zinc finger HIT domain-containing protein 3 (ZNHIT3) (Homo sapiens (Human)).